The primary structure comprises 335 residues: tRNA N6-adenosine threonylcarbamoyltransferase (335 aa).

The a divalent metal cation site is built by His-109, His-113, and Tyr-130. Substrate-binding positions include 130 to 134, Asp-162, Gly-177, Glu-181, and Asn-266; that span reads YVSGG. A divalent metal cation is bound at residue Asp-294.

This sequence belongs to the KAE1 / TsaD family. Component of the EKC/KEOPS complex composed of at least GON7, TP53RK, TPRKB, OSGEP and LAGE3; the whole complex dimerizes. The cofactor is a divalent metal cation.

The protein localises to the cytoplasm. It localises to the nucleus. The catalysed reaction is L-threonylcarbamoyladenylate + adenosine(37) in tRNA = N(6)-L-threonylcarbamoyladenosine(37) in tRNA + AMP + H(+). Its function is as follows. Component of the EKC/KEOPS complex that is required for the formation of a threonylcarbamoyl group on adenosine at position 37 (t(6)A37) in tRNAs that read codons beginning with adenine. The complex is probably involved in the transfer of the threonylcarbamoyl moiety of threonylcarbamoyl-AMP (TC-AMP) to the N6 group of A37. OSGEP likely plays a direct catalytic role in this reaction, but requires other protein(s) of the complex to fulfill this activity. The sequence is that of tRNA N6-adenosine threonylcarbamoyltransferase from Bos taurus (Bovine).